The sequence spans 225 residues: ATP-dependent dethiobiotin synthetase BioD (225 aa).

12–17 serves as a coordination point for ATP; it reads EVGKTY. Thr16 contributes to the Mg(2+) binding site. Lys37 is an active-site residue. Ser41 is a binding site for substrate. ATP is bound by residues Asp52, 114-117, and 174-175; these read EGAG and NC. The Mg(2+) site is built by Asp52 and Glu114.

Belongs to the dethiobiotin synthetase family. Homodimer. Mg(2+) serves as cofactor.

The protein resides in the cytoplasm. The catalysed reaction is (7R,8S)-7,8-diammoniononanoate + CO2 + ATP = (4R,5S)-dethiobiotin + ADP + phosphate + 3 H(+). Its pathway is cofactor biosynthesis; biotin biosynthesis; biotin from 7,8-diaminononanoate: step 1/2. In terms of biological role, catalyzes a mechanistically unusual reaction, the ATP-dependent insertion of CO2 between the N7 and N8 nitrogen atoms of 7,8-diaminopelargonic acid (DAPA, also called 7,8-diammoniononanoate) to form a ureido ring. The chain is ATP-dependent dethiobiotin synthetase BioD from Francisella tularensis subsp. novicida (strain U112).